The sequence spans 480 residues: Membrane-bound lytic murein transglycosylase F (480 aa).

Residues 1-15 (MNRILLTLLTLTLLA) form the signal peptide. Positions 16–259 (GCQRVAVEET…HLDEKYFAHV (244 aa)) are non-LT domain. The segment at 260–480 (KRFDYVDTRA…EKAITGAQPE (221 aa)) is LT domain. Residue Glu-304 is part of the active site.

The protein in the N-terminal section; belongs to the bacterial solute-binding protein 3 family. It in the C-terminal section; belongs to the transglycosylase Slt family.

The protein resides in the cell outer membrane. It catalyses the reaction Exolytic cleavage of the (1-&gt;4)-beta-glycosidic linkage between N-acetylmuramic acid (MurNAc) and N-acetylglucosamine (GlcNAc) residues in peptidoglycan, from either the reducing or the non-reducing ends of the peptidoglycan chains, with concomitant formation of a 1,6-anhydrobond in the MurNAc residue.. In terms of biological role, murein-degrading enzyme that degrades murein glycan strands and insoluble, high-molecular weight murein sacculi, with the concomitant formation of a 1,6-anhydromuramoyl product. Lytic transglycosylases (LTs) play an integral role in the metabolism of the peptidoglycan (PG) sacculus. Their lytic action creates space within the PG sacculus to allow for its expansion as well as for the insertion of various structures such as secretion systems and flagella. This Shewanella woodyi (strain ATCC 51908 / MS32) protein is Membrane-bound lytic murein transglycosylase F.